The primary structure comprises 753 residues: A-kinase anchor protein 200 (753 aa).

5 disordered regions span residues 1-345 (MGKA…QIEA), 462-482 (VETR…PSRV), 531-604 (TEQE…IDPA), 620-641 (VEKE…SDEQ), and 658-684 (VEET…DKEN). A lipid anchor (N-myristoyl glycine) is attached at Gly2. Basic and acidic residues-rich tracts occupy residues 8–38 (RSID…DQKT) and 59–77 (AVEK…DLTT). The span at 81-93 (AAVAEGGDAVAET) shows a compositional bias: low complexity. The segment at 119–148 (KSKSKKDKVKKKWSFRSISFGKKDKQKPAK) is F-actin binding. Positions 120–132 (SKSKKDKVKKKWS) are enriched in basic residues. A phosphoserine mark is found at Ser132, Ser135, and Ser137. The segment covering 139 to 151 (GKKDKQKPAKSEE) has biased composition (basic and acidic residues). Positions 152–181 (ATSPTSGTTSPTTAEAEAAPAGDAAVAEPS) are enriched in low complexity. A compositionally biased stretch (basic and acidic residues) spans 216–227 (EQEKQANGETEK). Residues 246 to 262 (EPATVTATESNTTATEE) show a composition bias toward low complexity. Residues 345–725 (ASSEVIETVT…AEQEGESNNK (381 aa)) form an interaction with PKA-R2 region. Residues 468–480 (SPPPPLPKSPPPS) show a composition bias toward pro residues. Residues 532-544 (EQEKQQEEAKVDS) show a composition bias toward basic and acidic residues. Residues 545–561 (VPETIEESSSTVVVEEV) show a composition bias toward low complexity. Basic and acidic residues predominate over residues 578 to 594 (DVQKPIEDQDTPDEKES). Positions 626 to 638 (SISSNVAESSSVS) are enriched in low complexity. Over residues 674–684 (EEAHSDNDKEN) the composition is skewed to basic and acidic residues.

Homodimer. Interacts with Cam; interaction is calcium-dependent and is inhibited by PKC-mediated phosphorylation of Akap200. Interacts with N/Notch; the interaction stabilizes N/Notch protein levels by preventing Cbl-mediated ubiquitination and subsequent lysosomal degradation of N/Notch. Interacts with Pka-R2. Binds to F-actin; interaction is independent of myristoylation, but is inhibited by Akap200 phosphorylation and Cam binding. Isoform B: Does not bind to Pka-R2. In terms of processing, myristoylated; myristoylation promotes accumulation at the cell periphery. Post-translationally, phosphorylated; phosphorylation prevents binding to F-actin and Cam. As to expression, detected in the brain in both neurons and glia (including perineurial glia); specifically in the neuronal nuclei in the cortex and synaptic neuropil (at protein level). Detected in germline cells, somatic follicle cells and outer rim of the ring canals during oogenesis (at protein level). Isoform A: Detected in the adult (at protein level). Isoform B: Detected in the adult with higher levels in the head (at protein level).

It localises to the cytoplasm. The protein resides in the cytosol. Its subcellular location is the cell membrane. The protein localises to the cytoskeleton. In terms of biological role, scaffolding protein involved in the regulation of PKA signaling and anchoring to the actin cytoskeleton integrating signals propagated by cAMP, diacylglycerol and calcium. Contributes to the maintenance and regulation of cytoskeletal structures in germline via PKA-mediated signaling. As part of ethanol response in the glia, mediates ethanol-induced structural remodeling of actin cytoskeleton and perineurial membrane topology by anchoring PKA to the membrane of perineurial glia. In specific tissues such as eye and thorax, promotes N/Notch protein stability by inhibiting Cbl-mediated ubiquitination and lysosomal degradation pathway of N/Notch in a PKA-independent way. In the circadian brain neurons evening cells (E-cells), might have a role in circadian pacemaker synchronization by playing a redundant role in signaling downstream of the G protein-couple receptor Pdfr. This is A-kinase anchor protein 200 from Drosophila melanogaster (Fruit fly).